The chain runs to 631 residues: Putative ATP-dependent DNA helicase Q1 (631 aa).

In terms of domain architecture, Helicase ATP-binding spans 118-293 (INAVMSKEDA…KDMLGIQAAL (176 aa)). 131 to 138 (LSTGGGKS) provides a ligand contact to ATP. The DEVH box motif lies at 237 to 240 (DEVH). In terms of domain architecture, Helicase C-terminal spans 318–466 (CTEEIAKTIK…NLYNMVRYAA (149 aa)). 4 residues coordinate Zn(2+): C471, C489, C493, and C496. The disordered stretch occupies residues 610–631 (ESKSRKRKASSSVEEEDVMVLD). Positions 622–631 (VEEEDVMVLD) are enriched in acidic residues.

It belongs to the helicase family. RecQ subfamily. The cofactor is Zn(2+).

The protein localises to the nucleus. The catalysed reaction is Couples ATP hydrolysis with the unwinding of duplex DNA by translocating in the 3'-5' direction.. The enzyme catalyses ATP + H2O = ADP + phosphate + H(+). In terms of biological role, DNA helicase that may play a role in the repair of DNA that is damaged by ultraviolet light or other mutagens. Exhibits a magnesium-dependent ATP-dependent DNA-helicase activity that unwinds single- and double-stranded DNA in a 3'-5' direction. The chain is Putative ATP-dependent DNA helicase Q1 from Caenorhabditis elegans.